The sequence spans 367 residues: Uroporphyrinogen decarboxylase (367 aa).

An N-acetylmethionine modification is found at M1. Residues R37, A39, R41, R50, D86, Y164, S219, and H339 each contribute to the coproporphyrinogen I site. Residues R37, A39, and R41 each contribute to the coproporphyrinogen III site. D86, Y164, S219, and H339 together coordinate coproporphyrinogen III.

This sequence belongs to the uroporphyrinogen decarboxylase family. Homodimer.

It is found in the cytoplasm. The protein resides in the cytosol. The enzyme catalyses uroporphyrinogen III + 4 H(+) = coproporphyrinogen III + 4 CO2. The catalysed reaction is uroporphyrinogen I + 4 H(+) = coproporphyrinogen I + 4 CO2. It participates in porphyrin-containing compound metabolism; protoporphyrin-IX biosynthesis; coproporphyrinogen-III from 5-aminolevulinate: step 4/4. In terms of biological role, catalyzes the sequential decarboxylation of the four acetate side chains of uroporphyrinogen to form coproporphyrinogen and participates in the fifth step in the heme biosynthetic pathway. Isomer I or isomer III of uroporphyrinogen may serve as substrate, but only coproporphyrinogen III can ultimately be converted to heme. In vitro also decarboxylates pentacarboxylate porphyrinogen I. The chain is Uroporphyrinogen decarboxylase from Ovis aries (Sheep).